The primary structure comprises 258 residues: Large ribosomal subunit protein uL2x (258 aa).

Positions 211–231 (HGGGNHQHIGHASTVRRDAPP) are disordered.

The protein belongs to the universal ribosomal protein uL2 family.

The sequence is that of Large ribosomal subunit protein uL2x (RPL8C) from Arabidopsis thaliana (Mouse-ear cress).